The primary structure comprises 373 residues: UDP-glucose 4-epimerase 3 (373 aa).

27-58 provides a ligand contact to NAD(+); the sequence is SVLVTGGAGYIGTHTVLRLLEKGFAVTVVDNF. Ser153 lines the substrate pocket. Tyr177 acts as the Proton acceptor in catalysis.

Belongs to the NAD(P)-dependent epimerase/dehydratase family. The cofactor is NAD(+).

It carries out the reaction UDP-alpha-D-glucose = UDP-alpha-D-galactose. It functions in the pathway carbohydrate metabolism; galactose metabolism. In terms of biological role, catalyzes the interconversion between UDP-glucose and UDP-galactose. The chain is UDP-glucose 4-epimerase 3 (UGE-3) from Oryza sativa subsp. japonica (Rice).